Consider the following 255-residue polypeptide: MKIGVFDSGVGGFSVLKSLLKAQLFDEIIYYGDSARVPYGTKDPTTIKQFGLEALDFFKPHQIKLLIVACNTASALALEEMQKHSKIPIVGVIEPSILAIKQQVKEKNAPILVLGTKATIQSNAYDNALKQQGYLNVSHLATSLFVPLIEESILEGELLETCMRYYFTPLKILPEVIILGCTHFPLIAQKIEGYFMEHFALSTPPLLIHSGDAIVEYLQQKYALKKNAHAFPKVEFHASGDVIWLEKQAKEWLKL.

Substrate-binding positions include 7–8 (DS) and 39–40 (YG). C70 acts as the Proton donor/acceptor in catalysis. 71–72 (NT) provides a ligand contact to substrate. C181 (proton donor/acceptor) is an active-site residue. 182–183 (TH) serves as a coordination point for substrate.

Belongs to the aspartate/glutamate racemases family.

The catalysed reaction is L-glutamate = D-glutamate. Its pathway is cell wall biogenesis; peptidoglycan biosynthesis. Provides the (R)-glutamate required for cell wall biosynthesis. This is Glutamate racemase from Helicobacter pylori (strain G27).